A 163-amino-acid polypeptide reads, in one-letter code: Ribonuclease H (163 aa).

The region spanning 4–146 is the RNase H type-1 domain; sequence SPKKVLIYTD…CDRLAVRASQ (143 aa). Residues aspartate 13, glutamate 51, aspartate 73, and aspartate 138 each contribute to the Mg(2+) site.

The protein belongs to the RNase H family. In terms of assembly, monomer. Mg(2+) serves as cofactor.

The protein localises to the cytoplasm. It catalyses the reaction Endonucleolytic cleavage to 5'-phosphomonoester.. Functionally, endonuclease that specifically degrades the RNA of RNA-DNA hybrids. The sequence is that of Ribonuclease H from Rippkaea orientalis (strain PCC 8801 / RF-1) (Cyanothece sp. (strain PCC 8801)).